Reading from the N-terminus, the 434-residue chain is MAVERIHAREILDSRGNPTVEVDLYTHKGMFRAAVPSGASTGIYEALELRDNDKSRFLGKGVLQAVDHINSTVAPAIVGSGLSVVDQEKIDNLMLEMDGTENKSKFGANAILGVSLAVCKAGAAEKDVPLYRHIADLAGNSDLILPVPAFNVINGGSHAGNKLAMQEFMILPVGAESFRDAMRIGAEVYHNLKSVIKEKYGKDATNVGDEGGFAPNILENSEALELLKEAIDKAGYTDKIVIGMDVAASEFYRDGKYDLDFKSPDDPSRYISADELGDLYQSFVRAYPVLSIEDPFDQDDWEAWSKFTANVGIQIVGDDLTVTNPKRIERAVEEKACNCLLLKVNQIGSVTEAIQACKLAQENGWGVMVSHRSGETEDTFIADLVVALCTGQIKTGAPCRSERLAKYNQLMRIEEELGDEARFAGHNFRNPSVL.

The substrate site is built by His158 and Glu167. Glu210 serves as the catalytic Proton donor. Asp245, Glu293, and Asp318 together coordinate Mg(2+). The substrate site is built by Glu293 and Asp318. The active-site Proton acceptor is Lys343. Substrate-binding positions include 370–373 (SHRS) and Lys394.

Belongs to the enolase family. In terms of assembly, homodimer. Mg(2+) is required as a cofactor. As to expression, expressed in the brain and, to much less but significant extents, in the pituitary and adrenal glands.

Its subcellular location is the cytoplasm. The enzyme catalyses (2R)-2-phosphoglycerate = phosphoenolpyruvate + H2O. It participates in carbohydrate degradation; glycolysis; pyruvate from D-glyceraldehyde 3-phosphate: step 4/5. The chain is Gamma-enolase (ENO2) from Gallus gallus (Chicken).